The following is a 1171-amino-acid chain: MSLRFVIGRAGSGKSTLCLHEVQEELKQRPRGETILYLVPEQMTFQTQQALIGSEDVRGSIRAQVFSFSRLAWKVLQEVGGASRLHIDEAGVHMLLRKIVESRKDGLSVFQKAAEQNGFFEHLGSMIAEFKRYNVTPSNVYEMWQQLDAHSSSAEQKLLANKVYDLQLLYDDFERALIGKYLDSEDYLQLLVENLPQSEYVKGAEVYIDGFHSFSPQELEIVRQLMICGARVTITLTIDEKTLAQPVNELDLFYETTLTYEKIKQVAREEKIEIEKTIPLMEQPRFHSPALAHLEMHYEARPNEKFHGEASVTIHTAANLRAEVEGVAREIRRLVAEENYRYRDIAVLLRNGESYYDVMRTLFTDYNIPHFIDEKRPMSHHPLVECIRSALEIISGNWRYDAVFRCVKTELLYPLDVRKETMREEMDEFENYCLAYGVQGKRWTSEDPWMYRRYRSLDDTNGMITDSEREMEEKINRLRDVVRTPVIRMQKRLKRAGTVMQMCEAVYLFLEELDVPKKLEALRIRAEESGDFLFATDHEQVWEEVMSLLDTFVEMLGEEKMSLSMFTDVMSTGLEALQFANIPPSLDQVLIANIDRSRLSNVKATFVIGVNEGVIPAAPMDEGMLSDEERDVLSAAGIELAPTTRQTLLEEQFVMYQMVTRATEKLYISCPLADEEGKTLLASSFIKKIKRMFPNVKDTFITNDVNDLSRSEQISYVATPEVTLSYVMQQLQTWKRYGFEGNLDFWWDVYNFYVTSDEWKQKSSRVLSSLFYRNRAQKLSTAVSRDLYGDKIKGSVSRMELFNRCAYAHFAQHGLSLRERDIFKLDAPDIGELFHAALKRIADRLLRENRTWADLSIKECEHLSTVVIEEIAPLLQRQILLSSNRHFYLKQKLQQIIFRTSIILREHAKSSGFVPVDLEVPFGMGGTGSLPPMEFSLPNGVKMEVVGRIDRVDKAEDENGTFLRIIDYKSSSKSLDLTEVYYGLALQMLTYLDVVTSNAQTWMKKGHAASPAGVLYFHIHNPIVEVKGDASEAEIEKEILKKFKMKGLVLGDADVVRLMDNKLSTGSSDIISAGLKKDGSFSARSSIASEQEFNVLQKYVHHTFKNIGKDITEGVIDIAPYKKGNKAACTFCNFKSVCQFDESLEDNQFRTLKDMKDSEAMEKIREEVGGE.

The region spanning 1 to 343 (MSLRFVIGRA…LVAEENYRYR (343 aa)) is the UvrD-like helicase ATP-binding domain. Position 8–15 (8–15 (GRAGSGKS)) interacts with ATP. Residues 281–587 (MEQPRFHSPA…QFANIPPSLD (307 aa)) enclose the UvrD-like helicase C-terminal domain. The [4Fe-4S] cluster site is built by C805, C1129, C1132, and C1138.

The protein belongs to the helicase family. AddB/RexB type 1 subfamily. In terms of assembly, heterodimer of AddA and AddB. Mg(2+) serves as cofactor. Requires [4Fe-4S] cluster as cofactor.

In terms of biological role, the heterodimer acts as both an ATP-dependent DNA helicase and an ATP-dependent, dual-direction single-stranded exonuclease. Recognizes the chi site generating a DNA molecule suitable for the initiation of homologous recombination. The AddB subunit has 5' -&gt; 3' nuclease activity but not helicase activity. This chain is ATP-dependent helicase/deoxyribonuclease subunit B, found in Bacillus thuringiensis (strain Al Hakam).